The chain runs to 557 residues: Potassium-transporting ATPase potassium-binding subunit (557 aa).

A run of 12 helical transmembrane segments spans residues 5–25 (GFLLIATFLLVLMVLARPLGS), 63–83 (LSAILGLNILGLAVLFFMLLG), 132–152 (GLTVQNFLSAASGIAVIFALI), 170–190 (LLRITLWVLTPVALLIALFFI), 253–273 (FVQMLAIFLIPTALCFAFGEV), 283–303 (LLWAMSVIFVICVGVVMWAEV), 329–349 (VLVSSLFAVVTTAASCGAVIA), 356–376 (ALGGMVPMWLMQIGEVVFGGV), 379–399 (GLYGMMLFVLLAVFIAGLMIG), 416–436 (LTALAILVTPTLVLMGAALAM), 484–504 (LLALCMFVGRFGVIIPVMAIA), and 526–546 (LFVGLLIGTVLLVGALTFIPA).

It belongs to the KdpA family. The system is composed of three essential subunits: KdpA, KdpB and KdpC.

It localises to the cell inner membrane. Its function is as follows. Part of the high-affinity ATP-driven potassium transport (or Kdp) system, which catalyzes the hydrolysis of ATP coupled with the electrogenic transport of potassium into the cytoplasm. This subunit binds the periplasmic potassium ions and delivers the ions to the membrane domain of KdpB through an intramembrane tunnel. The protein is Potassium-transporting ATPase potassium-binding subunit of Escherichia coli O127:H6 (strain E2348/69 / EPEC).